The following is a 144-amino-acid chain: Deoxyuridine 5'-triphosphate nucleotidohydrolase (144 aa).

Substrate is bound by residues 63 to 65 (RSG), N76, and 80 to 82 (TID).

It belongs to the dUTPase family. Mg(2+) serves as cofactor.

It catalyses the reaction dUTP + H2O = dUMP + diphosphate + H(+). It participates in pyrimidine metabolism; dUMP biosynthesis; dUMP from dCTP (dUTP route): step 2/2. This enzyme is involved in nucleotide metabolism: it produces dUMP, the immediate precursor of thymidine nucleotides and it decreases the intracellular concentration of dUTP so that uracil cannot be incorporated into DNA. This Bacteroides thetaiotaomicron (strain ATCC 29148 / DSM 2079 / JCM 5827 / CCUG 10774 / NCTC 10582 / VPI-5482 / E50) protein is Deoxyuridine 5'-triphosphate nucleotidohydrolase.